The chain runs to 580 residues: mRNA-decapping enzyme 1A (580 aa).

A Phosphoserine modification is found at S62. Positions 132–141 (RSQQAARDKQ) are enriched in basic and acidic residues. 3 disordered regions span residues 132–154 (RSQQ…DHRP), 172–209 (QMGD…QDKS), and 245–276 (LPGD…NMGI). 3 positions are modified to phosphoserine: S142, S179, and S180. The span at 173 to 196 (MGDSNISSPGLQPSTQISNLGSTE) shows a compositional bias: polar residues. Low complexity predominate over residues 253–264 (EPSSFLPFSFEP). 2 positions are modified to phosphoserine: S319 and S334. Residues 343–359 (QAVKTTPRQRSPLSSQP) are compositionally biased toward polar residues. A disordered region spans residues 343–371 (QAVKTTPRQRSPLSSQPVPELSQASLAAS). At T348 the chain carries Phosphothreonine. A Phosphoserine modification is found at S353. At R376 the chain carries Asymmetric dimethylarginine. Phosphothreonine is present on T401. Residues S422, S520, S521, and S523 each carry the phosphoserine modification. Residues 510-533 (TRSSDLERKASSPSPLTVGTSENQ) are disordered. Residues 520 to 531 (SSPSPLTVGTSE) are compositionally biased toward polar residues. Residues T526 and T529 each carry the phosphothreonine modification.

The protein belongs to the DCP1 family. Forms a complex with EDC3, DCP2, DDX6 and EDC4/HEDLS, within this complex directly interacts with EDC3. Part of a cytoplasmic complex containing proteins involved in mRNA decay, including XRN1 and LSM1. Interacts with DCP1B. Interacts with DCP2. Interacts with DDX17 in an RNA-independent manner. Interacts with PNRC2. Interacts with SMAD4. Interacts with UPF1. Interacts with ZC3HAV1. Interacts with ZFP36L1. Interacts with NBDY. Interacts with DHX34; the interaction is RNA-independent. In terms of processing, (Microbial infection) Cleaved by porcine reproductive and respiratory syndrome virus serine protease nsp4 after Glu-238. The cleavage inhibits DCP1A function.

The protein resides in the cytoplasm. Its subcellular location is the P-body. It is found in the nucleus. The catalysed reaction is a 5'-end (N(7)-methyl 5'-triphosphoguanosine)-ribonucleoside in mRNA + H2O = N(7)-methyl-GDP + a 5'-end phospho-ribonucleoside in mRNA + 2 H(+). Its function is as follows. Necessary for the degradation of mRNAs, both in normal mRNA turnover and in nonsense-mediated mRNA decay. Removes the 7-methyl guanine cap structure from mRNA molecules, yielding a 5'-phosphorylated mRNA fragment and 7m-GDP. Contributes to the transactivation of target genes after stimulation by TGFB1. Essential for embryonic development. The sequence is that of mRNA-decapping enzyme 1A (DCP1A) from Sus scrofa (Pig).